The following is a 1775-amino-acid chain: MQGPSQLALFYFANGLPPDDIQDLFQRLRSQSKTESGWTLRAFVVQATNALREEIRQLPHHLRNPLTPLDNALDLAVVPDWRRGPLAGALEGVLLCLIEIGSLIAYYERTPDPFKFSARTACFTGIGTGLLAAAAAAASPTLADLPRLGAAAVRIALRMGVLVAETSQSVEAREPDAPADNWAAVVMDLDEDTVREELNLFNASTNNLGPSRLFISAGGTDNVTISGPPSKLRQVFRVSEKLRSARYAQLPVYGGLCHAPHLYNCHHWTWIMEPINGAAFNQNMVDTAPLFSAGDDVPFEASTPRQLFESVVCDLLMGMIRWNRAVDGVVELLGQTLPSECQVYAFRPCAVVTGMVASGQVKLPHCQFQTHDLLGWTCHDDTDNGPTCREDSSIAIVGMACRFPGGANDLNQFWDLLEQGADVHRRVPADRYDVESHTDTSGKSRNTSLTPFGCFIDQPGLFDAGFFDMSPREAMQTDPMHRLALMTAYEALEQAGFVPNRTESTHLKRIGTFYGQSCDDYREANAGQEVDTYYIPGGCRAFAPGRINYFFKFSGPSFDCDTACSSSLATIQMACTSLQHGDTNMAVAGGLNILTNSDGFAGLSRGHFLSKTGGCKTFDCNADGYCRADGIGSIVLKRLDDAQRDNDHIFGIILAAATNHSARAISITHPHAPSQAELYRDILTRAGVSPLDVDFIEMHGTGTQAGDSTEMESITSVFSPGVPKRSRPLYIGSVKANVGHGEAAAGVMSLIKVLLVLQRQAIPKHVGIKTALNPRFPNLDRLNVRIPHDQVPWPRSPTRKRYALVNNFSAAGGNTSLLIEEPPVRPEPKADPRAAFTVAVSAKSKASLKNNLRSFLAYLESQPSISLAHLSYTTTARRMHHNHRIAVHGSTLSSIMQELEPYLPAVDTHRPVPNTPPSIAFVFSGQGSFYTGIARQLYEHHPGFRLQITRLHNICLSHGFPSFRRAITGDLSNDGSEAEPIITHLTIVCVSIALCRLWETLGVKPCVVAGASLGEFAALYAAGVLSASDAIYLVGRRAQLLQELCTPNTHAMLAVRATVEQIRNVLAGQPYEVACINGSSDITLSCSVADIINLQLAIEQHGYKCTRLDVPFAFHSAQMDPLLGPFEHIARGVTFKAPNIPVMSPSLGDCVFDGKTINASYMCNVTRNPVKFVDALETARGMDLVDAKTVWVEIGPHASYSRFVGSAMPPGTATIASLNRNEDNWSTFARSMAQLHNLGVDLNWHEWHAPFESELRLLTDLPAYQWNMKNYWIQYNGDWMLRKDGKSSAAAASHPHQAIPPALRTSLVHRLVCESVQETRVEVIVESDILHPDFFEAMNGHRMNGCAVATTAIHADIAFTLAKYLYSSIMPNSTDAPAINVKNMQVQHGLVARKDRSRPQLIRIRGIADVTRGLVSLSWHLVDEQGRRVEESFATAVAEFGNHEAWLEEWSPMTHLVVSRIDVLQRLADDGTANRLSRDMVYMLFNNLVDYAEKYRGMQMVVLHGLEAMANVTLAAPEQSGGKWTVAPHYIDSVVHLAGFILNGGNGLDPRRNFYVTPGWKSMRFARPLVPGVRYQSYVKMMPIREQSGFYAGDVYILHEGQIVGLVGGITFRTFPRSLINTFFSPPDTMTHGGSQAGSVHQPACSERTLPVGPARQDSAARETLCQGHGLSRTVMDSSDSSPATTLTPPTLPSVAASTESPIVHRAMALIAAETAIELTELSDETAFSSIGVDSLLSLVLAEKFTAEFHLDFRSSLFLDCPTIGDLKAWLIDYC.

The N-terminal acylcarrier protein transacylase domain (SAT) stretch occupies residues 29-258 (RSQSKTESGW…QLPVYGGLCH (230 aa)). The Ketosynthase family 3 (KS3) domain maps to 391–821 (DSSIAIVGMA…GGNTSLLIEE (431 aa)). Residues Cys-564, His-699, and His-740 each act as for beta-ketoacyl synthase activity in the active site. The segment at 921-1241 (FVFSGQGSFY…MAQLHNLGVD (321 aa)) is malonyl-CoA:ACP transacylase (MAT) domain. A product template (PT) domain region spans residues 1305 to 1626 (TSLVHRLVCE…RSLINTFFSP (322 aa)). An N-terminal hotdog fold region spans residues 1309–1455 (HRLVCESVQE…WLEEWSPMTH (147 aa)). Residues 1309-1621 (HRLVCESVQE…FRTFPRSLIN (313 aa)) enclose the PKS/mFAS DH domain. His-1341 functions as the Proton acceptor; for dehydratase activity in the catalytic mechanism. A C-terminal hotdog fold region spans residues 1472–1621 (TANRLSRDMV…FRTFPRSLIN (150 aa)). Asp-1532 acts as the Proton donor; for dehydratase activity in catalysis. The interval 1672-1694 (SRTVMDSSDSSPATTLTPPTLPS) is disordered. Residues 1677–1689 (DSSDSSPATTLTP) show a composition bias toward low complexity. The region spanning 1698-1775 (STESPIVHRA…DLKAWLIDYC (78 aa)) is the Carrier domain. Ser-1735 carries the O-(pantetheine 4'-phosphoryl)serine modification.

As to expression, endocrocin is specifically produced in conidia.

It carries out the reaction holo-[ACP] + 8 malonyl-CoA + 8 H(+) = atrochrysone carboxyl-[ACP] + 8 CO2 + 8 CoA + 2 H2O. It participates in secondary metabolite biosynthesis. Non-reducing polyketide synthase; part of the gene cluster that mediates the biosynthesis of endocrocin, a simple anthraquinone interesting for many biotechnological applications. The pathway begins with the synthesis of atrochrysone thioester by the polyketide synthase (PKS) encA. The atrochrysone carboxyl ACP thioesterase encB then breaks the thioester bond and releases the atrochrysone carboxylic acid from encA. The atrochrysone carboxylic acid is then converted to endocrocin anthrone which is further oxidized into endocrocin by the anthrone oxygenase encC. The exact function of encD has not been identified yet, but it negatively regulates endocrocin production, likely through the modification of endocrocin itself. This is Atrochrysone carboxylic acid synthase from Aspergillus fumigatus (strain ATCC MYA-4609 / CBS 101355 / FGSC A1100 / Af293) (Neosartorya fumigata).